We begin with the raw amino-acid sequence, 134 residues long: Small ribosomal subunit protein uS9 (134 aa).

Residues 109–134 (DARRTEPHKPSKSTKGPRAKRQKSYR) are disordered. A compositionally biased stretch (basic residues) spans 118–134 (PSKSTKGPRAKRQKSYR).

Belongs to the universal ribosomal protein uS9 family.

This chain is Small ribosomal subunit protein uS9, found in Methanococcus aeolicus (strain ATCC BAA-1280 / DSM 17508 / OCM 812 / Nankai-3).